We begin with the raw amino-acid sequence, 490 residues long: MEDKEDVENVDDVGYLPILFLYIAYAFIIFNGKLAEFIGKLKGERYLHTPEGYAPLFVEFEYFYQRRMYGRIKDAWDRPINSIAGAWIDVMPRASKHYSQRLELTGGKTIKCLNLGSYNYLGFAQNEGPVADKVIDSIYKYGVYTGSTSAEVGLSEPQRDLENLTARFVGKEDAIVFEMGFATNSGTLPALIGKGGLIISDSLNHASLATGCKNTGCKVKVFRHNDSKHLEEVIRESIIQGQPRTHRPWTMILIIIEGIYSMEGEVANLPEILAIKKKYKCYLYIDEAHSIGALGKTGRGIVDYYGIDPKEIDILMGTYTKSFGAIGGYVASDKSLIDHLRQSSFSQVYANSMSPVCAVQALEALRVIMGEDGTDTGAKKLKQLHDNSNYFREKIREMGFVILGNKDSPVIPLMLFNPAKLSAFSRLCLEKHIAVVVVGYPATPLTEPRTRFCISASHTIEDLDWALRQIDEIGDLITLKFHKGKYLKSK.

A helical transmembrane segment spans residues 10–30 (VDDVGYLPILFLYIAYAFIIF). Position 321 is an N6-(pyridoxal phosphate)lysine (Lys-321).

Belongs to the class-II pyridoxal-phosphate-dependent aminotransferase family. Forms a heterodimer with sptA. It depends on pyridoxal 5'-phosphate as a cofactor.

Its subcellular location is the endoplasmic reticulum membrane. The catalysed reaction is L-serine + hexadecanoyl-CoA + H(+) = 3-oxosphinganine + CO2 + CoA. It functions in the pathway lipid metabolism; sphingolipid metabolism. Its function is as follows. Catalytic subunit of serine palmitoyltransferase (SPT), which catalyzes the committed step in the synthesis of sphingolipids, the condensation of serine with palmitoyl CoA to form the long chain base 3-ketosphinganine. The sequence is that of Serine palmitoyltransferase 2 (sptB) from Dictyostelium discoideum (Social amoeba).